The primary structure comprises 264 residues: Apolipoprotein A-I (264 aa).

Positions 1–18 (MKAVVLAVALVFLTGSQA) are cleaved as a signal peptide. Repeat copies occupy residues 67–88 (LNLL…ERLG) and 89–110 (PLTR…QEMN). The interval 67 to 264 (LNLLENWDTL…DKARETLTAQ (198 aa)) is 10 X approximate tandem repeats. Methionine sulfoxide is present on methionine 109. Residues 111–121 (KDLEEVKQNVQ) form a 3; half-length repeat. 3 repeat units span residues 122–143 (PYLD…QRVA), 144–165 (PLGA…GKLS), and 166–187 (PVAE…TQLA). Residues 188–207 (PHSDKLRESLAQRLAELKSN) form a 7; truncated repeat. Residues 208–229 (PTLNEYHTRAKTHLNTFGEKAR) form repeat 8. The stretch at 230 to 240 (PALEDLRHTLI) is one 9; half-length repeat. Copy 10 of the repeat occupies 241 to 264 (PILDTLKTKVKSVIDKARETLTAQ).

The protein belongs to the apolipoprotein A1/A4/E family. Homodimer. Interacts with APOA1BP and CLU. Component of a sperm activating protein complex (SPAP), consisting of APOA1, an immunoglobulin heavy chain, an immunoglobulin light chain and albumin. Interacts with NDRG1. Interacts with SCGB3A2. Interacts with NAXE and YJEFN3. Post-translationally, glycosylated. Palmitoylated. In terms of processing, phosphorylation sites are present in the extracellular medium.

It is found in the secreted. In terms of biological role, participates in the reverse transport of cholesterol from tissues to the liver for excretion by promoting cholesterol efflux from tissues and by acting as a cofactor for the lecithin cholesterol acyltransferase (LCAT). As part of the SPAP complex, activates spermatozoa motility. This is Apolipoprotein A-I (Apoa1) from Mus pahari (Gairdner's shrew-mouse).